A 293-amino-acid polypeptide reads, in one-letter code: Nitrogenase iron protein (293 aa).

10–17 (GKGGIGKS) is an ATP binding site. Cys-98 is a [4Fe-4S] cluster binding site. Arg-101 bears the ADP-ribosylarginine; by dinitrogenase reductase ADP-ribosyltransferase mark. Cys-133 contributes to the [4Fe-4S] cluster binding site.

Belongs to the NifH/BchL/ChlL family. Homodimer. It depends on [4Fe-4S] cluster as a cofactor. The reversible ADP-ribosylation of Arg-101 inactivates the nitrogenase reductase and regulates nitrogenase activity.

The enzyme catalyses N2 + 8 reduced [2Fe-2S]-[ferredoxin] + 16 ATP + 16 H2O = H2 + 8 oxidized [2Fe-2S]-[ferredoxin] + 2 NH4(+) + 16 ADP + 16 phosphate + 6 H(+). Its function is as follows. The key enzymatic reactions in nitrogen fixation are catalyzed by the nitrogenase complex, which has 2 components: the iron protein and the molybdenum-iron protein. The sequence is that of Nitrogenase iron protein from Stutzerimonas stutzeri (strain A1501) (Pseudomonas stutzeri).